The sequence spans 266 residues: 3-methyl-2-oxobutanoate hydroxymethyltransferase (266 aa).

The Mg(2+) site is built by Asp-45 and Asp-84. 3-methyl-2-oxobutanoate-binding positions include 45-46, Asp-84, and Lys-113; that span reads DS. Residue Glu-115 participates in Mg(2+) binding. The active-site Proton acceptor is Glu-183.

It belongs to the PanB family. Homodecamer; pentamer of dimers. Requires Mg(2+) as cofactor.

It is found in the cytoplasm. The enzyme catalyses 3-methyl-2-oxobutanoate + (6R)-5,10-methylene-5,6,7,8-tetrahydrofolate + H2O = 2-dehydropantoate + (6S)-5,6,7,8-tetrahydrofolate. Its pathway is cofactor biosynthesis; (R)-pantothenate biosynthesis; (R)-pantoate from 3-methyl-2-oxobutanoate: step 1/2. Its function is as follows. Catalyzes the reversible reaction in which hydroxymethyl group from 5,10-methylenetetrahydrofolate is transferred onto alpha-ketoisovalerate to form ketopantoate. The protein is 3-methyl-2-oxobutanoate hydroxymethyltransferase of Coxiella burnetii (strain CbuG_Q212) (Coxiella burnetii (strain Q212)).